The sequence spans 713 residues: Macrophage-expressed gene 1 protein (713 aa).

The N-terminal stretch at 1 to 19 (MNSFMALVLIWMIIACAEA) is a signal peptide. One can recognise an MACPF domain in the interval 30–345 (GFQICKNALK…TAVRHYYTFN (316 aa)). The cysteines at positions 34 and 70 are disulfide-linked. Transmembrane regions (beta stranded) follow at residues 113–120 (LSINTELA) and 127–132 (GKFSTE). N-linked (GlcNAc...) asparagine glycosylation occurs at asparagine 185. 2 beta stranded membrane passes run 235 to 244 (TVTASAGIAF) and 248 to 256 (VNFKVETDY). N-linked (GlcNAc...) asparagine glycosylation is present at asparagine 269. The cysteines at positions 350 and 369 are disulfide-linked. The N-linked (GlcNAc...) asparagine glycan is linked to asparagine 375. 5 cysteine pairs are disulfide-bonded: cysteine 385-cysteine 394, cysteine 432-cysteine 446, cysteine 436-cysteine 442, cysteine 531-cysteine 569, and cysteine 554-cysteine 574. Residues 410–653 (PPGYSPVHLL…GDSNGMSGGE (244 aa)) form a P2 region. The chain crosses the membrane as a helical span at residues 654–674 (AAGITLGVTIALGIVITLAIY).

This sequence belongs to the MPEG1 family. Homooligomer; predominantly forms a homooligomeric arc-shaped pore complex instead of complete rings of 16 subunits. In terms of processing, proteolytically processed in two steps to generate the Macrophage-expressed gene 1 protein, processed form: cleaved by trypsin in proximity of the helical transmembrane domain releases the ectodomain into the lysosomal lumen to orient the pore-forming domain toward the endogenous membranes, and processed by the asparagine endopeptidase (LGMN). Proteolytic processing in antigen-containing vesicles is pH-dependent. Post-translationally, monoubiquitinated in response to bacterial infection; ubiquitination is required for vesicular localization and antibacterial activity and can be blocked by bacterial cell cycle inhibiting factor (cif). As to expression, expressed constitutively in a variety of cell types including macrophages, microglia, neutrophils, T cells, marginal zone B cells, keratinocytes, splenocytes and intestinal epithelial cells.

Its subcellular location is the cytoplasmic vesicle membrane. It localises to the cytoplasmic vesicle. It is found in the phagosome membrane. With respect to regulation, forms arc- and ring-shaped pre-pores on top of the membrane at neutral to slightly acidic pH conditions and converts to pores upon acidification. Undergoes transition from the pre-pore to the pore in a processive clockwise hand-over-hand process. In the pore state, 2 alpha-helical regions refold into transmembrane hairpins (TMH1 and TMH2) in each protomer that form in the ensemble complex giant beta-barrel transmembrane pores. In terms of biological role, pore-forming protein involved in both innate and adaptive immunity. Plays a central role in antigen cross-presentation in dendritic cells by forming a pore in antigen-containing compartments, thereby promoting delivery of antigens for cross-presentation. Also involved in innate immune response following bacterial infection; shows antibacterial activity against a wide spectrum of Gram-positive, Gram-negative and acid-fast bacteria. Reduces the viability of the intracytosolic pathogen L.monocytogenes by inhibiting acidification of the phagocytic vacuole of host cells which restricts bacterial translocation from the vacuole to the cytosol. Required for the antibacterial activity of reactive oxygen species and nitric oxide. Pore-forming protein that plays a central role in antigen cross-presentation in dendritic cells by mediating delivery of antigens for cross-presentation. Dendritic cells bridge innate and adaptive immunity by capturing exogenous antigens on MHC class-I molecules and presenting them to naive CD8(+) T-cells. Acts by forming a pore in antigen-containing compartments, promoting the release of antigens into the cytosol, enabling generation of MHCI:peptide complexes and T-cell priming. The polypeptide is Macrophage-expressed gene 1 protein (Mus musculus (Mouse)).